Reading from the N-terminus, the 198-residue chain is Na(+)-translocating NADH-quinone reductase subunit E (198 aa).

A run of 6 helical transmembrane segments spans residues 11 to 31, 35 to 55, 77 to 97, 110 to 130, 140 to 160, and 176 to 196; these read SVFI…FLAV, VSTS…AVPV, FLNF…LEMF, GIFL…SFMV, VVYG…LAGL, and LGIT…FSGI.

Belongs to the NqrDE/RnfAE family. Composed of six subunits; NqrA, NqrB, NqrC, NqrD, NqrE and NqrF.

It localises to the cell inner membrane. It carries out the reaction a ubiquinone + n Na(+)(in) + NADH + H(+) = a ubiquinol + n Na(+)(out) + NAD(+). Its function is as follows. NQR complex catalyzes the reduction of ubiquinone-1 to ubiquinol by two successive reactions, coupled with the transport of Na(+) ions from the cytoplasm to the periplasm. NqrA to NqrE are probably involved in the second step, the conversion of ubisemiquinone to ubiquinol. The sequence is that of Na(+)-translocating NADH-quinone reductase subunit E from Actinobacillus succinogenes (strain ATCC 55618 / DSM 22257 / CCUG 43843 / 130Z).